The following is a 982-amino-acid chain: E3 ubiquitin-protein ligase CBL-B (982 aa).

The 4H stretch occupies residues 35-167 (PPKQAAADRR…KAIFPNGQFQ (133 aa)). In terms of domain architecture, Cbl-PTB spans 35–343 (PPKQAAADRR…GRSYNPDLTG (309 aa)). The interval 168 to 240 (GDNFRITKAD…FEFDIFTRLF (73 aa)) is EF-hand-like. Positions 221, 223, 225, 227, and 232 each coordinate Ca(2+). The SH2-like stretch occupies residues 241–343 (QPWGSILRNW…GRSYNPDLTG (103 aa)). A Phosphoserine; by PKC/PRKCQ modification is found at S282. R286 serves as a coordination point for 4-O-phospho-L-tyrosine. The interval 344–372 (LCEPTPHDHIKVTQEQYELYCEMGSTFQL) is linker. Y363 is modified (phosphotyrosine). An RING-type zinc finger spans residues 373–412 (CKICAENDKDVKIEPCGHLMCTSCLTAWQESDGQGCPFCR). Positions 466–571 (NVRKCTDRQN…PPPIPPDNRL (106 aa)) are disordered. Residues 473-486 (RQNSPVTSPGSSPL) show a composition bias toward polar residues. 6 positions are modified to phosphoserine: S476, S480, S484, S521, S525, and S529. The segment at 543 to 568 (PLPAPPPPLRDPPPPPPERPPPIPPD) is interaction with VAV1. Over residues 544 to 567 (LPAPPPPLRDPPPPPPERPPPIPP) the composition is skewed to pro residues. A Phosphoserine modification is found at S634. 2 positions are modified to phosphotyrosine: Y665 and Y709. Disordered stretches follow at residues 688–731 (GPLA…NVKP) and 769–929 (FDSA…EAAL). Polar residues predominate over residues 715–725 (HPVSLNSQPSH). Pro residues predominate over residues 819-828 (PSLPPPPPPA). Positions 838–848 (PPGSSSRPSSG) are enriched in low complexity. Positions 880–899 (VKTNRTSQDYDQLPSCSDGS) are enriched in polar residues. Residue Y889 is modified to Phosphotyrosine. The segment at 891 to 927 (QLPSCSDGSQAPARPPKPRPRRTAPEIHHRKPHGPEA) is interaction with SH3KBP1. Positions 906-922 (PKPRPRRTAPEIHHRKP) are enriched in basic residues. Residues 931-970 (NVDAKIAKLMGEGYAFEEVKRALEIAQNNVEVARSILREF) enclose the UBA domain.

Interacts with SH3 domain-containing proteins LCK, CRK and SORBS1. Interacts with LCP2 and ZAP70. Interacts with CBL. Interacts with SH3 domain-containing proteins VAV1, FYN, FGR, PLCG1, GRB2, CRKL, PIK3R1 and SH3KBP1/CIN85. Identified in heterotrimeric complexes with SH3KBP1/CIN85, CD2AP and ARHGEF7, where one CBLB peptide binds two copies of the other protein. Interacts with poly-ubiquitinated proteins. Dimerization is required for the binding of poly-ubiquitin, but not for the binding of mono-ubiquitin. Interacts with EGFR (phosphorylated). Interacts with IFT20. Post-translationally, phosphorylated on tyrosine and serine residues upon TCR or BCR activation, and upon various types of cell stimulation. In terms of processing, auto-ubiquitinated upon EGF-mediated cell activation or upon T-cell costimulation by CD28; which promotes proteasomal degradation. Expressed in placenta, heart, lung, kidney, spleen, ovary and testis, as well as fetal brain and liver and hematopoietic cell lines, but not in adult brain, liver, pancreas, salivary gland, or skeletal muscle. Present in lymphocytes (at protein level).

The protein resides in the cytoplasm. It carries out the reaction S-ubiquitinyl-[E2 ubiquitin-conjugating enzyme]-L-cysteine + [acceptor protein]-L-lysine = [E2 ubiquitin-conjugating enzyme]-L-cysteine + N(6)-ubiquitinyl-[acceptor protein]-L-lysine.. Its pathway is protein modification; protein ubiquitination. E3 ubiquitin-protein ligase which accepts ubiquitin from specific E2 ubiquitin-conjugating enzymes, and transfers it to substrates, generally promoting their degradation by the proteasome. Negatively regulates TCR (T-cell receptor), BCR (B-cell receptor) and FCER1 (high affinity immunoglobulin epsilon receptor) signal transduction pathways. In naive T-cells, inhibits VAV1 activation upon TCR engagement and imposes a requirement for CD28 costimulation for proliferation and IL-2 production. Also acts by promoting PIK3R1/p85 ubiquitination, which impairs its recruitment to the TCR and subsequent activation. In activated T-cells, inhibits PLCG1 activation and calcium mobilization upon restimulation and promotes anergy. In B-cells, acts by ubiquitinating SYK and promoting its proteasomal degradation. Slightly promotes SRC ubiquitination. May be involved in EGFR ubiquitination and internalization. May be functionally coupled with the E2 ubiquitin-protein ligase UB2D3. In association with CBL, required for proper feedback inhibition of ciliary platelet-derived growth factor receptor-alpha (PDGFRA) signaling pathway via ubiquitination and internalization of PDGFRA. The polypeptide is E3 ubiquitin-protein ligase CBL-B (CBLB) (Homo sapiens (Human)).